The chain runs to 320 residues: N-acetylneuraminate lyase (320 aa).

Aceneuramate-binding residues include Thr-51 and Thr-52. Tyr-143 serves as the catalytic Proton donor. The active-site Schiff-base intermediate with substrate is the Lys-173. Aceneuramate contacts are provided by Ser-175, Gly-199, Asp-201, Glu-202, and Ser-218.

This sequence belongs to the DapA family. NanA subfamily. As to quaternary structure, homotetramer.

The protein localises to the cytoplasm. It carries out the reaction aceneuramate = aldehydo-N-acetyl-D-mannosamine + pyruvate. Its pathway is amino-sugar metabolism; N-acetylneuraminate degradation. Its function is as follows. Catalyzes the cleavage of N-acetylneuraminic acid (sialic acid) to form pyruvate and N-acetylmannosamine via a Schiff base intermediate. It prevents sialic acids from being recycled and returning to the cell surface. Involved in the N-glycolylneuraminic acid (Neu5Gc) degradation pathway. In Rattus norvegicus (Rat), this protein is N-acetylneuraminate lyase.